The sequence spans 286 residues: NAD kinase (286 aa).

Catalysis depends on Asp74, which acts as the Proton acceptor. NAD(+) contacts are provided by residues 74-75, 148-149, Asp178, Ala186, 189-194, and Gln244; these read DG, ND, and TAYNLS.

Belongs to the NAD kinase family. A divalent metal cation serves as cofactor.

It localises to the cytoplasm. It catalyses the reaction NAD(+) + ATP = ADP + NADP(+) + H(+). Involved in the regulation of the intracellular balance of NAD and NADP, and is a key enzyme in the biosynthesis of NADP. Catalyzes specifically the phosphorylation on 2'-hydroxyl of the adenosine moiety of NAD to yield NADP. The chain is NAD kinase from Campylobacter jejuni subsp. jejuni serotype O:6 (strain 81116 / NCTC 11828).